The chain runs to 123 residues: MVNMRKVLALMQVFRERYDHKCDFNFCDIAVSIVCRSELDFINEPGLSNYAKRRRARRLGRCVRCFRVNPGFYFTKRCDGITCVPGISWNYDVEDYIKRGRVTGDRETPSTFHGYGYPVGHKT.

The tract at residues 52-55 (KRRR) is basic. The C4-type zinc-finger motif lies at 62–83 (CVRCFRVNPGFYFTKRCDGITC).

The protein belongs to the carlaviruses nucleic acid-binding protein family.

Suppressor of viral-induced RNA silencing. The potential mechanism of action is based on sequestering siRNAs. This Populus balsamifera (Balsam poplar) protein is RNA silencing suppressor.